A 330-amino-acid polypeptide reads, in one-letter code: Aspartate--ammonia ligase (330 aa).

This sequence belongs to the class-II aminoacyl-tRNA synthetase family. AsnA subfamily.

It is found in the cytoplasm. The enzyme catalyses L-aspartate + NH4(+) + ATP = L-asparagine + AMP + diphosphate + H(+). The protein operates within amino-acid biosynthesis; L-asparagine biosynthesis; L-asparagine from L-aspartate (ammonia route): step 1/1. This Serratia proteamaculans (strain 568) protein is Aspartate--ammonia ligase.